The following is a 254-amino-acid chain: Undecaprenyl-diphosphatase (254 aa).

Transmembrane regions (helical) follow at residues 1-21 (MDII…FLPI), 41-61 (LTKA…MLIY), 70-90 (IDLW…GFIF), 97-117 (LFNV…FLIV), 134-154 (VSWT…IPGT), 175-195 (AEFS…YDLL), 209-229 (FLIG…LFLV), and 234-254 (FTFV…LMIL).

It belongs to the UppP family.

It localises to the cell inner membrane. The enzyme catalyses di-trans,octa-cis-undecaprenyl diphosphate + H2O = di-trans,octa-cis-undecaprenyl phosphate + phosphate + H(+). Its function is as follows. Catalyzes the dephosphorylation of undecaprenyl diphosphate (UPP). Confers resistance to bacitracin. The chain is Undecaprenyl-diphosphatase from Sulfurovum sp. (strain NBC37-1).